A 1668-amino-acid chain; its full sequence is Kinesin-like protein KIF21B (1668 aa).

A Kinesin motor domain is found at 8 to 371 (CVKVAVRIRP…LKYANRARNI (364 aa)). 87–94 (GQTGAGKT) contacts ATP. Positions 372-465 (KNKVVVNQDK…LMSQEANLLL (94 aa)) form a coiled coil. Residues 401–1100 (MEYKAGKRVI…LQALIYNVQH (700 aa)) form an interaction with TRIM3 region. Disordered stretches follow at residues 553–629 (KKKE…PEEK) and 837–866 (RVGL…GARS). A compositionally biased stretch (acidic residues) spans 579-628 (NSEETDENEAEEEEEERDESGCEEEEGREDEDEDSGSEESLVDSDSDPEE). Ser580 carries the post-translational modification Phosphoserine. The residue at position 583 (Thr583) is a Phosphothreonine. The span at 847-866 (SGAEVSASTTSSEAESGARS) shows a compositional bias: low complexity. Residues 924 to 1019 (IIDIVMQRMT…TKEELDSTDT (96 aa)) are a coiled coil. Phosphoserine is present on residues Ser1150, Ser1168, and Ser1217. The span at 1199 to 1219 (LPTRGSTFPRQSRGATDTSPL) shows a compositional bias: polar residues. The interval 1199–1253 (LPTRGSTFPRQSRGATDTSPLTRRKSYDRGQPIRSTDMGFTPPSSPPTRPRNDRN) is disordered. Phosphothreonine is present on Thr1239. Ser1243 is modified (phosphoserine). WD repeat units lie at residues 1308 to 1345 (GHTK…EIAA), 1348 to 1386 (GHPN…KCIR), 1412 to 1450 (QGEH…PIGK), 1453 to 1495 (GHIG…TGTI), 1504 to 1541 (PHYD…LIQQ), 1545 to 1584 (AHKD…PIGE), and 1587 to 1624 (GHDS…TPCL).

This sequence belongs to the TRAFAC class myosin-kinesin ATPase superfamily. Kinesin family. As to quaternary structure, interacts with TRIM3; the interaction positively affects motility of KIF21B. Interacts with GABARAP and GABA(A) receptor subunits: GABRG2, GABRA1 and GABRA2. May interact with GABA(A) receptor subunits: GABRB2 and GABRB3. As to expression, expressed in brain (at protein level). Expressed in spleen and at lower levels in testes.

It localises to the cytoplasm. The protein resides in the cytoskeleton. The protein localises to the cell projection. It is found in the dendrite. Its subcellular location is the growth cone. It localises to the axon. The protein resides in the cytoplasmic vesicle. Plus-end directed microtubule-dependent motor protein which displays processive activity. Is involved in regulation of microtubule dynamics, synapse function and neuronal morphology, including dendritic tree branching and spine formation. Plays a role in lerning and memory. Involved in delivery of gamma-aminobutyric acid (GABA(A)) receptor to cell surface. This Mus musculus (Mouse) protein is Kinesin-like protein KIF21B (Kif21b).